The chain runs to 262 residues: UPF0739 protein C1orf74 homolog (262 aa).

The protein belongs to the UPF0739 family.

The polypeptide is UPF0739 protein C1orf74 homolog (Xenopus laevis (African clawed frog)).